The chain runs to 265 residues: Glutamate racemase (265 aa).

Substrate-binding positions include 9–10 (DS) and 41–42 (YS). Cys-73 serves as the catalytic Proton donor/acceptor. 74 to 75 (NT) contacts substrate. Cys-184 (proton donor/acceptor) is an active-site residue. Residue 185–186 (TH) coordinates substrate.

Belongs to the aspartate/glutamate racemases family.

It carries out the reaction L-glutamate = D-glutamate. It functions in the pathway cell wall biogenesis; peptidoglycan biosynthesis. Its function is as follows. Provides the (R)-glutamate required for cell wall biosynthesis. This Actinobacillus pleuropneumoniae serotype 3 (strain JL03) protein is Glutamate racemase.